Reading from the N-terminus, the 428-residue chain is C4-dicarboxylate transport protein (428 aa).

A run of 9 helical transmembrane segments spans residues 4 to 24, 44 to 64, 76 to 96, 142 to 162, 184 to 204, 222 to 242, 289 to 309, 326 to 346, and 352 to 372; these read SLFK…ILLG, LIKM…IAGM, VALL…LIIV, IGAF…LFGF, VIFG…FGAM, LIIC…GTIA, VVGL…SIYL, IFHQ…AAGV, and IVLA…LALI.

The protein belongs to the dicarboxylate/amino acid:cation symporter (DAACS) (TC 2.A.23) family.

The protein resides in the cell inner membrane. Its function is as follows. Responsible for the transport of dicarboxylates such as succinate, fumarate, and malate from the periplasm across the membrane. In Salmonella arizonae (strain ATCC BAA-731 / CDC346-86 / RSK2980), this protein is C4-dicarboxylate transport protein.